Consider the following 453-residue polypeptide: Serine incorporator 1 (453 aa).

Gly-2 carries N-myristoyl glycine lipidation. Residues 2 to 39 are Cytoplasmic-facing; the sequence is GSVLGLCSMASWIPCLCGSAPCLLCRCCPSGNNSTVTR. A helical membrane pass occupies residues 40 to 60; the sequence is LIYALFLLVGVCVACVMLIPG. Over 61-88 the chain is Lumenal; it reads MEEQLNKIPGFCENEKGVVPCNILVGYK. The chain crosses the membrane as a helical span at residues 89 to 109; sequence AVYRLCFGLAMFYLLLSLLMI. Over 110–123 the chain is Cytoplasmic; it reads KVKSSSDPRAAVHN. A helical transmembrane segment spans residues 124–144; the sequence is GFWFFKFAAAIAIIIGAFFIP. Over 145–151 the chain is Lumenal; the sequence is EGTFTTV. A helical membrane pass occupies residues 152 to 172; it reads WFYVGMAGAFCFILIQLVLLI. The Cytoplasmic segment spans residues 173–197; it reads DFAHSWNESWVEKMEEGNSRCWYAA. Residues 198-218 traverse the membrane as a helical segment; that stretch reads LLSATALNYLLSLVAIVLFFV. Over 219-231 the chain is Lumenal; it reads YYTHPASCSENKA. The helical transmembrane segment at 232-252 threads the bilayer; sequence FISVNMLLCIGASVMSILPKI. Residues 253 to 259 are Cytoplasmic-facing; the sequence is QESQPRS. A helical transmembrane segment spans residues 260-280; it reads GLLQSSVITVYTMYLTWSAMT. The Lumenal portion of the chain corresponds to 281 to 309; that stretch reads NEPETNCNPSLLSIIGYNTTSTVPKEGQS. The helical transmembrane segment at 310–330 threads the bilayer; it reads VQWWHAQGIIGLILFLLCVFY. Topologically, residues 331-387 are cytoplasmic; the sequence is SSIRTSNNSQVNKLTLTSDESTLIEDGGARSDGSLEDGDDVHRAVDNERDGVTYSYS. The residue at position 351 (Ser-351) is a Phosphoserine. A Phosphothreonine modification is found at Thr-352. Residues Ser-361 and Ser-364 each carry the phosphoserine modification. Residues 388–408 traverse the membrane as a helical segment; it reads FFHFMLFLASLYIMMTLTNWY. Topologically, residues 409–426 are lumenal; that stretch reads RYEPSREMKSQWTAVWVK. A helical transmembrane segment spans residues 427–447; sequence ISSSWIGIVLYVWTLVAPLVL. The Cytoplasmic portion of the chain corresponds to 448–453; the sequence is TNRDFD.

It belongs to the TDE1 family. Interacts with SPTLC1.

Its subcellular location is the endoplasmic reticulum membrane. Enhances the incorporation of serine into phosphatidylserine and sphingolipids. The sequence is that of Serine incorporator 1 (SERINC1) from Pongo abelii (Sumatran orangutan).